A 347-amino-acid polypeptide reads, in one-letter code: GMP reductase (347 aa).

108 to 131 (ADFEKTQQILSQNPQLNFVCIDVA) serves as a coordination point for NADP(+). K(+) contacts are provided by Gly-181 and Gly-183. Cys-186 acts as the Thioimidate intermediate in catalysis. 216-239 (IISDGGCTMPGDVAKAFGGGADFV) provides a ligand contact to NADP(+).

The protein belongs to the IMPDH/GMPR family. GuaC type 1 subfamily. In terms of assembly, homotetramer.

It catalyses the reaction IMP + NH4(+) + NADP(+) = GMP + NADPH + 2 H(+). Its function is as follows. Catalyzes the irreversible NADPH-dependent deamination of GMP to IMP. It functions in the conversion of nucleobase, nucleoside and nucleotide derivatives of G to A nucleotides, and in maintaining the intracellular balance of A and G nucleotides. This chain is GMP reductase, found in Klebsiella pneumoniae subsp. pneumoniae (strain ATCC 700721 / MGH 78578).